The primary structure comprises 365 residues: TD and POZ domain-containing protein 1-like (365 aa).

Positions 19–149 constitute an MATH domain; that stretch reads KFCYKWTISN…EDQLTICCKV (131 aa). One can recognise a BTB domain in the interval 188–255; sequence TDCCLLVAGH…IYTGKAPYLH (68 aa).

The protein belongs to the Tdpoz family.

In Mus musculus (Mouse), this protein is TD and POZ domain-containing protein 1-like.